A 382-amino-acid polypeptide reads, in one-letter code: MTAPLNHSAPITVEVALGDRGYDIVIGRDVLRSLGTRIAALRPGARTAIVTDRNVATCWLAQTQAALDDVGIVSMPIVVEGGEGSKSYAGLQQVCEALIAAKIERNDLVIALGGGVVGDLAGFAASIVRRGLDFVQVPTSLLAQVDSSVGGKTGINSPHGKNLVGAFHQPVLVIADTAVLDTLSPRQFRAGYAEVAKYGALGDEAFFAWLEANHAEIVRGGSAREHAIATSCRAKAAIVARDERETGERALLNLGHTFGHALEAATGFSERLFHGEGVAVGMVLAAQFSAERGMLSNDAAARLSHHLAEVGLPTRLQDIAGFAQEGLADADALMALMAQDKKVKRGRLTFILLEAIGRAVIAHDVEPEPVRDFLARKLADKT.

NAD(+) is bound by residues 115 to 119 (GVVGD), 139 to 140 (TS), K152, and K161. Zn(2+) is bound by residues E194, H256, and H274.

Belongs to the sugar phosphate cyclases superfamily. Dehydroquinate synthase family. It depends on Co(2+) as a cofactor. The cofactor is Zn(2+). Requires NAD(+) as cofactor.

The protein resides in the cytoplasm. It carries out the reaction 7-phospho-2-dehydro-3-deoxy-D-arabino-heptonate = 3-dehydroquinate + phosphate. The protein operates within metabolic intermediate biosynthesis; chorismate biosynthesis; chorismate from D-erythrose 4-phosphate and phosphoenolpyruvate: step 2/7. In terms of biological role, catalyzes the conversion of 3-deoxy-D-arabino-heptulosonate 7-phosphate (DAHP) to dehydroquinate (DHQ). The polypeptide is 3-dehydroquinate synthase (Rhodopseudomonas palustris (strain BisB18)).